Reading from the N-terminus, the 306-residue chain is Transcription initiation factor IIB (306 aa).

2 consecutive repeat copies span residues 122–205 and 216–297.

This sequence belongs to the TFIIB family.

Stabilizes TBP binding to an archaeal box-A promoter. Also responsible for recruiting RNA polymerase II to the pre-initiation complex (DNA-TBP-TFIIB). The chain is Transcription initiation factor IIB from Saccharolobus shibatae (strain ATCC 51178 / DSM 5389 / JCM 8931 / NBRC 15437 / B12) (Sulfolobus shibatae).